Consider the following 511-residue polypeptide: Probable lipid II flippase MurJ (511 aa).

A run of 11 helical transmembrane segments spans residues D25–F45, S85–F105, I133–S153, Y156–F178, I245–I265, L271–L291, L315–V335, L356–A376, F400–V420, F442–V462, and L481–I501.

This sequence belongs to the MurJ/MviN family.

Its subcellular location is the cell inner membrane. It participates in cell wall biogenesis; peptidoglycan biosynthesis. In terms of biological role, involved in peptidoglycan biosynthesis. Transports lipid-linked peptidoglycan precursors from the inner to the outer leaflet of the cytoplasmic membrane. The sequence is that of Probable lipid II flippase MurJ from Buchnera aphidicola subsp. Acyrthosiphon pisum (strain APS) (Acyrthosiphon pisum symbiotic bacterium).